Here is a 181-residue protein sequence, read N- to C-terminus: Probable inosine/xanthosine triphosphatase (181 aa).

A Mg(2+)-binding site is contributed by D65.

It belongs to the YjjX NTPase family. In terms of assembly, homodimer. Mg(2+) serves as cofactor. It depends on Mn(2+) as a cofactor.

It catalyses the reaction XTP + H2O = XDP + phosphate + H(+). The catalysed reaction is ITP + H2O = IDP + phosphate + H(+). Functionally, phosphatase that hydrolyzes non-canonical purine nucleotides such as XTP and ITP to their respective diphosphate derivatives. Probably excludes non-canonical purines from DNA/RNA precursor pool, thus preventing their incorporation into DNA/RNA and avoiding chromosomal lesions. This Caldivirga maquilingensis (strain ATCC 700844 / DSM 13496 / JCM 10307 / IC-167) protein is Probable inosine/xanthosine triphosphatase.